A 293-amino-acid chain; its full sequence is Sodium-type flagellar protein MotY (293 aa).

The signal sequence occupies residues 1–21; the sequence is MNKWLITSGVMLSLLSANSYA. The OmpA-like domain occupies 175–292; the sequence is YSFEDIAFTI…RVVISLGRTQ (118 aa).

It localises to the cell membrane. In terms of biological role, may play the role of a stator in the sodium flagellar motor, stabilizing the force-generating unit through direct interaction with the cell wall. This is Sodium-type flagellar protein MotY from Vibrio parahaemolyticus serotype O3:K6 (strain RIMD 2210633).